The following is a 966-amino-acid chain: Glycine dehydrogenase (decarboxylating) (966 aa).

Residue Lys713 is modified to N6-(pyridoxal phosphate)lysine.

It belongs to the GcvP family. The glycine cleavage system is composed of four proteins: P, T, L and H. It depends on pyridoxal 5'-phosphate as a cofactor.

The enzyme catalyses N(6)-[(R)-lipoyl]-L-lysyl-[glycine-cleavage complex H protein] + glycine + H(+) = N(6)-[(R)-S(8)-aminomethyldihydrolipoyl]-L-lysyl-[glycine-cleavage complex H protein] + CO2. Its function is as follows. The glycine cleavage system catalyzes the degradation of glycine. The P protein binds the alpha-amino group of glycine through its pyridoxal phosphate cofactor; CO(2) is released and the remaining methylamine moiety is then transferred to the lipoamide cofactor of the H protein. This chain is Glycine dehydrogenase (decarboxylating), found in Shewanella halifaxensis (strain HAW-EB4).